Consider the following 523-residue polypeptide: Probable lipid II flippase MurJ (523 aa).

12 helical membrane-spanning segments follow: residues 98-118 (AFYSLLLVFLGVLTLLGIVYV), 146-166 (IMFGFVFFVCTYAFYMGILNA), 170-190 (FGLPALAPALLNVSMLVFTFM), 201-221 (GLAWGVLIGGLLQALLLAVAL), 246-266 (MLPGLIGMGLLQFSTLVNLYF), 284-304 (LLELPLSLISVSIGAALLPTL), 328-348 (LFLAWPAALGLYILAEPIIEV), 360-380 (VQMTAAILRIYAVSLLLVSCS), 395-415 (VPMVLALVSLAVHVSLAPVLM), 422-442 (GLMISGVVAALINAVLLMGLL), 461-481 (FVLAGAGMVISLQAYELLMAQ), and 489-509 (LALFVTILLAVVAYFGLAYVL).

This sequence belongs to the MurJ/MviN family.

Its subcellular location is the cell inner membrane. The protein operates within cell wall biogenesis; peptidoglycan biosynthesis. Involved in peptidoglycan biosynthesis. Transports lipid-linked peptidoglycan precursors from the inner to the outer leaflet of the cytoplasmic membrane. This chain is Probable lipid II flippase MurJ, found in Bdellovibrio bacteriovorus (strain ATCC 15356 / DSM 50701 / NCIMB 9529 / HD100).